Here is a 434-residue protein sequence, read N- to C-terminus: Mitochondrial distribution and morphology protein 12 (434 aa).

An SMP-LTD domain is found at 1–434 (MSIDIDWERA…VYPSFWTFLV (434 aa)). Residues 70 to 83 (YEEDDNENFSESSE) are compositionally biased toward acidic residues. Disordered regions lie at residues 70-141 (YEED…LRSP) and 181-277 (TPLG…LPPR). Residues 86–97 (SPTREPVDRYGS) are compositionally biased toward basic and acidic residues. Residues 215–237 (SAQSRPSTANTGNTLLSRGSMSS) are compositionally biased toward polar residues.

The protein belongs to the MDM12 family. In terms of assembly, component of the ER-mitochondria encounter structure (ERMES) or MDM complex, composed of MMM1, MDM10, MDM12 and MDM34. An MMM1 homodimer associates with one molecule of MDM12 on each side in a pairwise head-to-tail manner, and the SMP-LTD domains of MMM1 and MDM12 generate a continuous hydrophobic tunnel for phospholipid trafficking.

Its subcellular location is the mitochondrion outer membrane. The protein localises to the endoplasmic reticulum membrane. Its function is as follows. Component of the ERMES/MDM complex, which serves as a molecular tether to connect the endoplasmic reticulum (ER) and mitochondria. Components of this complex are involved in the control of mitochondrial shape and protein biogenesis, and function in nonvesicular lipid trafficking between the ER and mitochondria. MDM12 is required for the interaction of the ER-resident membrane protein MMM1 and the outer mitochondrial membrane-resident beta-barrel protein MDM10. The MDM12-MMM1 subcomplex functions in the major beta-barrel assembly pathway that is responsible for biogenesis of all mitochondrial outer membrane beta-barrel proteins, and acts in a late step after the SAM complex. The MDM10-MDM12-MMM1 subcomplex further acts in the TOM40-specific pathway after the action of the MDM12-MMM1 complex. Essential for establishing and maintaining the structure of mitochondria and maintenance of mtDNA nucleoids. This Ajellomyces dermatitidis (strain ER-3 / ATCC MYA-2586) (Blastomyces dermatitidis) protein is Mitochondrial distribution and morphology protein 12.